Consider the following 123-residue polypeptide: Small ribosomal subunit protein uS12 (123 aa).

The tract at residues 1-30 (MPTIQQLIRKPRQPKIKRSKSQHMEGCPQK) is disordered. Residues 9-21 (RKPRQPKIKRSKS) are compositionally biased toward basic residues. At Asp89 the chain carries 3-methylthioaspartic acid. Residues 104 to 123 (TQGVKDRRQRRSKYGAKRPK) form a disordered region. The segment covering 110–123 (RRQRRSKYGAKRPK) has biased composition (basic residues).

It belongs to the universal ribosomal protein uS12 family. As to quaternary structure, part of the 30S ribosomal subunit. Contacts proteins S8 and S17. May interact with IF1 in the 30S initiation complex.

In terms of biological role, with S4 and S5 plays an important role in translational accuracy. Functionally, interacts with and stabilizes bases of the 16S rRNA that are involved in tRNA selection in the A site and with the mRNA backbone. Located at the interface of the 30S and 50S subunits, it traverses the body of the 30S subunit contacting proteins on the other side and probably holding the rRNA structure together. The combined cluster of proteins S8, S12 and S17 appears to hold together the shoulder and platform of the 30S subunit. The sequence is that of Small ribosomal subunit protein uS12 from Jannaschia sp. (strain CCS1).